A 185-amino-acid polypeptide reads, in one-letter code: MSVLFPINLEGALEALLFVSPEPLSLKKIAQTLELSVEEAKEIVLRLQEKLEQDQRGIMLHFSGEEVWLTTRPDFSVYIERLFKPPAQHLTQATLETLAIIAYKQPVTKTEIELIRGVKADSSIATLLEKGLIEEAGRKDAPGRPIIYRTTAKFLEFFGLKSLDELPPLNLENEAVNDGNNNFEE.

The protein belongs to the ScpB family. Homodimer. Homodimerization may be required to stabilize the binding of ScpA to the Smc head domains. Component of a cohesin-like complex composed of ScpA, ScpB and the Smc homodimer, in which ScpA and ScpB bind to the head domain of Smc. The presence of the three proteins is required for the association of the complex with DNA.

The protein resides in the cytoplasm. Participates in chromosomal partition during cell division. May act via the formation of a condensin-like complex containing Smc and ScpA that pull DNA away from mid-cell into both cell halves. This is Segregation and condensation protein B from Carboxydothermus hydrogenoformans (strain ATCC BAA-161 / DSM 6008 / Z-2901).